A 406-amino-acid chain; its full sequence is Protrudin (406 aa).

Topologically, residues 1-71 (MQAAERDGVA…AAEGVRALLR (71 aa)) are cytoplasmic. Residues 1–97 (MQAAERDGVA…LLLTLDQAAW (97 aa)) form a sufficient for homooligomerization region. The tract at residues 1–210 (MQAAERDGVA…LYLLPLCWVM (210 aa)) is sufficient for localization to endoplasmic reticulum tubular network. A helical membrane pass occupies residues 72-92 (WQRPLCSLLVCLGLNFLLLTL). Residue aspartate 93 is a topological domain, lumenal. Residues 94–114 (QAAWYSVLALLVLLPALLGYL) traverse the membrane as a helical segment. The Cytoplasmic portion of the chain corresponds to 115-192 (QETYRVRPSE…NPTVSSQFYG (78 aa)). The segment at residues 193-213 (ALLGSVCILYLLPLCWVMAIL) is an intramembrane region (helical). Over 214–406 (NSTLFLGNSQ…CAQCNQMLIK (193 aa)) the chain is Cytoplasmic. The segment at 239–295 (LGTKPLESAPEPAKPLPTDAPPDRTPTPTSTEDLTPGSVEEAEEAEPDEEFKDAIEE) is disordered. Residues 250–263 (PAKPLPTDAPPDRT) show a composition bias toward pro residues. The segment covering 278 to 295 (EEAEEAEPDEEFKDAIEE) has biased composition (acidic residues). The segment at 339-405 (SNNFGTCTGC…VCAQCNQMLI (67 aa)) adopts an FYVE-type zinc-finger fold. Zn(2+) is bound by residues cysteine 345, cysteine 348, cysteine 361, cysteine 364, cysteine 369, cysteine 372, cysteine 397, and cysteine 400.

As to quaternary structure, can form homooligomers (monomers, dimers and tetramers).

It localises to the recycling endosome membrane. Its subcellular location is the endoplasmic reticulum membrane. It is found in the cell projection. The protein localises to the growth cone membrane. Functionally, key regulator of RAB11-dependent vesicular trafficking during neurite extension through polarized membrane transport. Promotes axonal elongation and contributes to the establishment of neuronal cell polarity. Involved in nerve growth factor-induced neurite formation in VAPA-dependent manner. Contributes to both the formation and stabilization of the tubular ER network. Involved in ER morphogenesis by regulating the sheet-to-tubule balance and possibly the density of tubule interconnections. The chain is Protrudin (ZFYVE27) from Gallus gallus (Chicken).